Consider the following 1531-residue polypeptide: Multidrug resistance-associated protein 1 (1531 aa).

The Extracellular portion of the chain corresponds to 1 to 33 (MALRGFCSADGSDPLWDWNVTWYTSNPDFTKCF). N19 carries an N-linked (GlcNAc...) asparagine glycan. A helical membrane pass occupies residues 34-54 (QNTVLVWVPCFYLWACFPFYF). Topologically, residues 55–74 (LYLSRHDRGYIQMTLLNKTK) are cytoplasmic. A helical transmembrane segment spans residues 75–95 (TALGFLLWIVCWADLFYSFWE). At 96-100 (RSRGI) the chain is on the extracellular side. The chain crosses the membrane as a helical span at residues 101-121 (FLAPVFLVSPTLLGITMLLAT). Residues 122–133 (FLIQLERRKGVQ) are Cytoplasmic-facing. The helical transmembrane segment at 134-154 (SSGIMLTFWLVALLCALAILR) threads the bilayer. The Extracellular segment spans residues 155-172 (SKIMTALKEDVQVDLFRD). Residues 173-193 (MTFYVYFSLVLIQLVLSCFSD) traverse the membrane as a helical segment. The Cytoplasmic segment spans residues 194-316 (RSPLFSETIH…KEWNPSLFKV (123 aa)). A Phosphotyrosine modification is found at Y277. Residue S289 is modified to Phosphoserine. Residues 317-337 (LYKTFGPYFLMSFFFKAIHDL) form a helical membrane-spanning segment. One can recognise an ABC transmembrane type-1 1 domain in the interval 325–608 (FLMSFFFKAI…LPMVISSIVQ (284 aa)). Residues 338 to 363 (MMFSGPEILKLLINFVNDTKAPDWQG) are Extracellular-facing. The helical transmembrane segment at 364-384 (YFYTALLFVAACLQTLVLHQY) threads the bilayer. Residues 385 to 440 (FHICFVSGMRIKTAVIGAVYRKALVITNAARKSSTVGEIVNLMSVDAQRFMDLATY) are Cytoplasmic-facing. A helical membrane pass occupies residues 441–461 (INMIWSAPLQVILALYLLWRN). The Extracellular portion of the chain corresponds to 462-464 (LGP). The chain crosses the membrane as a helical span at residues 465–485 (PILAGVAVMVLMVPVNAVMAM). Over 486 to 547 (KTKTYQVAHM…VLKKSAYLAA (62 aa)) the chain is Cytoplasmic. Residue K503 is modified to N6-succinyllysine. The helical transmembrane segment at 548–568 (VGTFTWVCTPFLVALCTFAVY) threads the bilayer. Residues 569 to 590 (VTIDKNNVLDAQKAFVSLALFN) lie on the Extracellular side of the membrane. A helical transmembrane segment spans residues 591 to 611 (ILRFPLNILPMVISSIVQASV). At 612-967 (SLKRLRIFLS…VKLSVYWDYM (356 aa)) the chain is on the cytoplasmic side. The 225-residue stretch at 644–868 (ITVRNATFTW…DGAFAEFLRT (225 aa)) folds into the ABC transporter 1 domain. 678-685 (GQVGCGKS) is a binding site for ATP. Residues 871–893 (SAEQEQDPEDNGVTGVSGPGKEA) form a disordered region. S905, S915, and S930 each carry phosphoserine. The disordered stretch occupies residues 917–938 (SSSYSGDVSRQHNSTAELQKDG). Over residues 922–933 (GDVSRQHNSTAE) the composition is skewed to polar residues. A helical membrane pass occupies residues 968–988 (KAIGLFISFLSIFLFICNHVA). An ABC transmembrane type-1 2 domain is found at 975-1256 (SFLSIFLFIC…LVRMSSEMET (282 aa)). The Extracellular segment spans residues 989–1025 (ALASNYWLSLWTDDPIVNGTQEHTKVRLSVYGALGIS). N1006 carries N-linked (GlcNAc...) asparagine glycosylation. The chain crosses the membrane as a helical span at residues 1026 to 1046 (QGIAVFGYSMAVSIGGILASR). The Cytoplasmic segment spans residues 1047 to 1089 (CLHVDLLHSILRSPMSFFERTPSGNLVNRFSKELDTVDSMIPE). A helical membrane pass occupies residues 1090 to 1110 (VIKMFMGSLFNVIGACIVILL). A1111 is a topological domain (extracellular). A helical transmembrane segment spans residues 1112-1132 (TPIAAIIIPPLGLIYFFVQRF). The Cytoplasmic segment spans residues 1133-1203 (YVASSRQLKR…VANRWLAVRL (71 aa)). Residues 1204–1224 (ECVGNCIVLFAALFAVISRHS) traverse the membrane as a helical segment. The Extracellular segment spans residues 1225–1226 (LS). A helical transmembrane segment spans residues 1227 to 1247 (AGLVGLSVSYSLQVTTYLNWL). At 1248 to 1531 (VRMSSEMETN…YNMARDAGLV (284 aa)) the chain is on the cytoplasmic side. An ABC transporter 2 domain is found at 1293 to 1527 (VEFRNYCLRY…RGLFYNMARD (235 aa)). Position 1327–1334 (1327–1334 (GRTGAGKS)) interacts with ATP.

The protein belongs to the ABC transporter superfamily. ABCC family. Conjugate transporter (TC 3.A.1.208) subfamily.

The protein localises to the cell membrane. It localises to the basolateral cell membrane. The catalysed reaction is ATP + H2O + xenobioticSide 1 = ADP + phosphate + xenobioticSide 2.. It catalyses the reaction an S-substituted glutathione(in) + ATP + H2O = an S-substituted glutathione(out) + ADP + phosphate + H(+). The enzyme catalyses sphing-4-enine 1-phosphate(in) + ATP + H2O = sphing-4-enine 1-phosphate(out) + ADP + phosphate + H(+). It carries out the reaction leukotriene C4(in) + ATP + H2O = leukotriene C4(out) + ADP + phosphate + H(+). The catalysed reaction is 17beta-estradiol 17-O-(beta-D-glucuronate)(in) + ATP + H2O = 17beta-estradiol 17-O-(beta-D-glucuronate)(out) + ADP + phosphate + H(+). It catalyses the reaction daunorubicin(in) + ATP + H2O = daunorubicin(out) + ADP + phosphate + H(+). The enzyme catalyses vincristine(in) + ATP + H2O = vincristine(out) + ADP + phosphate + H(+). It carries out the reaction 2',3'-cGAMP(in) + ATP + H2O = 2',3'-cGAMP(out) + ADP + phosphate + H(+). The catalysed reaction is S-[(2E,6E,10E)-geranylgeranyl]-L-glutathione(in) + ATP + H2O = S-[(2E,6E,10E)-geranylgeranyl]-L-glutathione(out) + ADP + phosphate + H(+). It catalyses the reaction prostaglandin A2-S-(R)-glutathione(in) + ATP + H2O = prostaglandin A2-S-(R)-glutathione(out) + ADP + phosphate + H(+). The enzyme catalyses prostaglandin A2-S-(S)-glutathione(in) + ATP + H2O = prostaglandin A2-S-(S)-glutathione(out) + ADP + phosphate + H(+). MK 571 inhibits sphingosine 1-phosphate and leukotriene C4 export. In terms of biological role, mediates export of organic anions and drugs from the cytoplasm. Mediates ATP-dependent transport of glutathione and glutathione conjugates, leukotriene C4, estradiol-17-beta-o-glucuronide, methotrexate, antiviral drugs and other xenobiotics. Confers resistance to anticancer drugs by decreasing accumulation of drug in cells, and by mediating ATP- and GSH-dependent drug export. Hydrolyzes ATP with low efficiency. Catalyzes the export of sphingosine 1-phosphate from mast cells independently of their degranulation. Participates in inflammatory response by allowing export of leukotriene C4 from leukotriene C4-synthesizing cells. Mediates ATP-dependent, GSH-independent cyclic GMP-AMP (cGAMP) export. Thus, by limiting intracellular cGAMP concentrations negatively regulates the cGAS-STING pathway. Exports S-geranylgeranyl-glutathione (GGG) in lymphoid cells and stromal compartments of lymphoid organs. ABCC1 (via extracellular transport) with GGT5 (via GGG catabolism) establish GGG gradients within lymphoid tissues to position P2RY8-positive lymphocytes at germinal centers in lymphoid follicles and restrict their chemotactic transmigration from blood vessels to the bone marrow parenchyma. Mediates basolateral export of GSH-conjugated R- and S-prostaglandin A2 diastereomers in polarized epithelial cells. The sequence is that of Multidrug resistance-associated protein 1 from Macaca fascicularis (Crab-eating macaque).